Consider the following 554-residue polypeptide: MAVQISETVRPFANFSPNPSLWGDQFINHKSKTQQISRIYLEEIEGLKNEVKCMLTSTPEGKMADTVNLIDTLERLGVSYHFEKEIEEKMKHLFNLIKADNYKDHEGCDLYTDALHFRLFRQHGYPISSGIFNKWMDGNGKFKESIKSDAKGLLSLYEACCLRTHGDTLLDEALVFATASLKSMAANLASPLRKQVEHALFQHLHFGIPRVEARHFITFYEEEEHKNEMLLRFAKLDFNALQALHKEELSEISKWWKDLDLISKLPYARDRVVESYFWAVGVYYQPKYSRARIMLTKTIAMTAILDDTYDSYGTLEELDVLTKAIERWDIKEINGLPEYIKGFYKQVLKLYQQLEEELAKEGRSYAVYYAIEACKELARSYAVEAKWFKKGYLPGFEEYLINSLVTSTAGYLNIISFFGVESVTKEDFEWFSKKPRIAVATQIITRVIDDIATYEVEKEKGQSATGIDCYMKEHGVSKEKAMQRFYEMSTNAWKDINEEGLSWPSSFSRDIFVQLRNFSRMVDVTYGKNEDGYSKPEKILKPLIIALFVDQIKL.

Mg(2+) contacts are provided by Asp-306, Asp-310, Thr-453, and Glu-457. Positions 306–310 (DDTYD) match the DDXXD motif motif.

The protein belongs to the terpene synthase family. Requires Mg(2+) as cofactor.

It is found in the cytoplasm. Its subcellular location is the cytosol. The enzyme catalyses (2E,6E)-farnesyl diphosphate = (+)-(R)-germacrene A + diphosphate. Its pathway is secondary metabolite biosynthesis; terpenoid biosynthesis. Sesquiterpene synthase involved in germacrene A biosynthesis. Also produces additional sesquiterpene products, including 4,5-di-epi-aristolochene, eremophilene, alpha-selinene. The sequence is that of Germacrene A synthase from Pogostemon cablin (Patchouli).